The following is a 380-amino-acid chain: Pectinesterase QRT1 (380 aa).

Positions 1-26 are cleaved as a signal peptide; that stretch reads MKVEAFIPAVLLLCFGVMLCLKSSCA. 2 N-linked (GlcNAc...) asparagine glycosylation sites follow: asparagine 74 and asparagine 137. Substrate contacts are provided by threonine 164 and glutamine 198. The Proton donor role is filled by aspartate 221. A glycan (N-linked (GlcNAc...) asparagine) is linked at asparagine 227. A disulfide bridge links cysteine 235 with cysteine 255. The active-site Nucleophile is the aspartate 242. The substrate site is built by arginine 298 and tryptophan 300. The N-linked (GlcNAc...) asparagine glycan is linked to asparagine 302.

This sequence belongs to the pectinesterase family. Expressed in flower buds, siliques, developing guard cells, floral nectares, at the stigmatic surface, in the hypocotyl-root transition zone and the area of lateral root emergence. Not expressed in mature leaves.

It localises to the secreted. It is found in the cell wall. It carries out the reaction [(1-&gt;4)-alpha-D-galacturonosyl methyl ester](n) + n H2O = [(1-&gt;4)-alpha-D-galacturonosyl](n) + n methanol + n H(+). The protein operates within glycan metabolism; pectin degradation; 2-dehydro-3-deoxy-D-gluconate from pectin: step 1/5. Pectinesterase required for cell type-specific pectin degradation to separate microspores. The sequence is that of Pectinesterase QRT1 from Arabidopsis thaliana (Mouse-ear cress).